A 116-amino-acid chain; its full sequence is Ribosome-binding factor A (116 aa).

The protein belongs to the RbfA family. In terms of assembly, monomer. Binds 30S ribosomal subunits, but not 50S ribosomal subunits or 70S ribosomes.

Its subcellular location is the cytoplasm. Functionally, one of several proteins that assist in the late maturation steps of the functional core of the 30S ribosomal subunit. Associates with free 30S ribosomal subunits (but not with 30S subunits that are part of 70S ribosomes or polysomes). Required for efficient processing of 16S rRNA. May interact with the 5'-terminal helix region of 16S rRNA. The sequence is that of Ribosome-binding factor A from Clostridium botulinum (strain Alaska E43 / Type E3).